The sequence spans 398 residues: Argininosuccinate synthase (398 aa).

8 to 16 is a binding site for ATP; it reads AYSGGLDTS. Residue tyrosine 87 coordinates L-citrulline. Glycine 117 provides a ligand contact to ATP. L-aspartate is bound by residues threonine 119, asparagine 123, and aspartate 124. Asparagine 123 provides a ligand contact to L-citrulline. 4 residues coordinate L-citrulline: arginine 127, serine 175, glutamate 259, and tyrosine 271.

Belongs to the argininosuccinate synthase family. Type 1 subfamily. Homotetramer.

It is found in the cytoplasm. The enzyme catalyses L-citrulline + L-aspartate + ATP = 2-(N(omega)-L-arginino)succinate + AMP + diphosphate + H(+). Its pathway is amino-acid biosynthesis; L-arginine biosynthesis; L-arginine from L-ornithine and carbamoyl phosphate: step 2/3. This chain is Argininosuccinate synthase, found in Corynebacterium kroppenstedtii (strain DSM 44385 / JCM 11950 / CIP 105744 / CCUG 35717).